We begin with the raw amino-acid sequence, 491 residues long: Nucleoside transporter 1.1 (491 aa).

6 helical membrane-spanning segments follow: residues 27–47 (FYVY…VNAV), 82–102 (YNLI…LSWF), 109–129 (VRLL…MVVP), 136–156 (AGAV…KSIF), 173–193 (STMM…QIIV), and 209–229 (KIYY…LILL). Residues 260–273 (CHTDEHPTHDKEGR) show a composition bias toward basic and acidic residues. Disordered stretches follow at residues 260–280 (CHTD…SGKE) and 290–309 (AAAK…PHEV). Asn274 carries N-linked (GlcNAc...) asparagine glycosylation. 5 helical membrane passes run 333 to 353 (MFVA…GIAV), 361 to 381 (WFST…RFSP), 395 to 415 (WIIV…LLHS), 427 to 447 (VMEV…LVLG), and 460 to 480 (FVAG…GTVL).

This sequence belongs to the SLC29A/ENT transporter (TC 2.A.57) family.

The protein resides in the membrane. The catalysed reaction is adenosine(in) + H(+)(in) = adenosine(out) + H(+)(out). It catalyses the reaction uridine(in) + H(+)(in) = uridine(out) + H(+)(out). Sodium-independent high affinity nucleoside:H(+) symporter; transports adenosine and uridine. Can transport cytidine and thymidine. The chain is Nucleoside transporter 1.1 from Leishmania donovani.